The primary structure comprises 872 residues: DNA polymerase 1 (872 aa).

It belongs to the DNA polymerase type-B family.

It carries out the reaction DNA(n) + a 2'-deoxyribonucleoside 5'-triphosphate = DNA(n+1) + diphosphate. This Sulfurisphaera ohwakuensis protein is DNA polymerase 1 (pol-alpha).